A 157-amino-acid polypeptide reads, in one-letter code: 3-dehydroquinate dehydratase (157 aa).

Y29 functions as the Proton acceptor in the catalytic mechanism. Substrate-binding residues include N80, H86, and D93. H107 functions as the Proton donor in the catalytic mechanism. Residues 108–109 (IS) and R118 contribute to the substrate site.

It belongs to the type-II 3-dehydroquinase family. As to quaternary structure, homododecamer.

The enzyme catalyses 3-dehydroquinate = 3-dehydroshikimate + H2O. The protein operates within metabolic intermediate biosynthesis; chorismate biosynthesis; chorismate from D-erythrose 4-phosphate and phosphoenolpyruvate: step 3/7. Its function is as follows. Catalyzes a trans-dehydration via an enolate intermediate. In Streptomyces coelicolor (strain ATCC BAA-471 / A3(2) / M145), this protein is 3-dehydroquinate dehydratase (aroQ).